The chain runs to 1113 residues: Potassium channel subfamily U member 1 (1113 aa).

The Extracellular portion of the chain corresponds to 1–24; it reads MSQTLLDNLNKKELTETSCTIEIQ. A helical transmembrane segment spans residues 25–45; sequence AAFILSSLATFFGGLIVLFIF. Topologically, residues 46–101 are cytoplasmic; sequence RIALKISRNWKTVKGPRGILELFSSRRIEVNPLRKLYFHGVFRERIEMLLSAQTIV. The chain crosses the membrane as a helical span at residues 102–122; it reads GQVLVILVFVLSIGSLVIYFI. Topologically, residues 123 to 137 are extracellular; that stretch reads NSMDPVRKCSSYEDK. The helical transmembrane segment at 138-158 threads the bilayer; that stretch reads IVHVDLSFNAFFSFYFGLRFW. Residues 159–165 lie on the Cytoplasmic side of the membrane; the sequence is AAEDKIK. The chain crosses the membrane as a helical span at residues 166-186; that stretch reads FWLEMNSIVDIFTIPPTFISY. Residues 187–188 lie on the Extracellular side of the membrane; sequence YL. A helical; Voltage-sensor membrane pass occupies residues 189–209; the sequence is KSNWLGLRFLRALRLLELPKI. The Cytoplasmic segment spans residues 210–226; sequence LQILQVIKTSNSVKLSK. A helical membrane pass occupies residues 227–247; sequence LMSIVISTWFTAAGFLHLVEN. Topologically, residues 248–259 are extracellular; the sequence is SGDPWLNGRNSQ. The segment at residues 260–282 is an intramembrane region (pore-forming); sequence TMSYFESIYLVTATMSTVGFGDV. At 283-290 the chain is on the extracellular side; the sequence is VAKTSLGR. The helical transmembrane segment at 291–311 threads the bilayer; sequence IFIVFFTLGSLILFANYIPEM. The Cytoplasmic portion of the chain corresponds to 312-1113; that stretch reads VELFSTRKKY…FDASDIDPGK (802 aa). RCK N-terminal domains lie at 331 to 473 and 710 to 881; these read KKFI…DNII and QNHI…DEAI. Residues 1047-1081 show a composition bias toward polar residues; the sequence is ASIQDQDTTTNVTSMSQGSNFQGAQSALNEHSLSP. The tract at residues 1047-1091 is disordered; it reads ASIQDQDTTTNVTSMSQGSNFQGAQSALNEHSLSPASAMGEKKSP.

Belongs to the potassium channel family. Calcium-activated (TC 1.A.1.3) subfamily. KCa1.1/KCNMA1 sub-subfamily. As to quaternary structure, homotetramer; which constitutes the activated potassium channel. Interacts with LRRC52; this interaction changes channel gating properties, such as shifting gating to more negative potentials at a given pH.

The protein resides in the cell membrane. It localises to the cell projection. Its subcellular location is the cilium. The protein localises to the flagellum membrane. The catalysed reaction is K(+)(in) = K(+)(out). Its activity is regulated as follows. Regulated by changes in cytosolic pH; activated by alkalization. Not activated by intracellular Ca(2+). VU0546110 acts as a selective inhibitor. The auxiliary subunit LRRC52 shifts the activation of KCNU1 to more negative potentials at a given pH. In terms of biological role, testis-specific potassium channel activated by both intracellular pH and membrane voltage that mediates export of K(+). Represents the primary spermatozoan K(+) current. The channel underlies a pH-triggered membrane hyperpolarization during the process of sperm capacitation, as sperm encounter the alkaline environment near the ovum in the female reproductive tract, thereby playing an essential for male fertility. The protein is Potassium channel subfamily U member 1 (Kcnu1) of Rattus norvegicus (Rat).